We begin with the raw amino-acid sequence, 294 residues long: Phosphatidylserine decarboxylase proenzyme (294 aa).

Catalysis depends on charge relay system; for autoendoproteolytic cleavage activity residues Asp88, His145, and Ser248. Ser248 acts as the Schiff-base intermediate with substrate; via pyruvic acid; for decarboxylase activity in catalysis. Ser248 carries the post-translational modification Pyruvic acid (Ser); by autocatalysis.

It belongs to the phosphatidylserine decarboxylase family. PSD-B subfamily. Prokaryotic type I sub-subfamily. Heterodimer of a large membrane-associated beta subunit and a small pyruvoyl-containing alpha subunit. Pyruvate is required as a cofactor. In terms of processing, is synthesized initially as an inactive proenzyme. Formation of the active enzyme involves a self-maturation process in which the active site pyruvoyl group is generated from an internal serine residue via an autocatalytic post-translational modification. Two non-identical subunits are generated from the proenzyme in this reaction, and the pyruvate is formed at the N-terminus of the alpha chain, which is derived from the carboxyl end of the proenzyme. The autoendoproteolytic cleavage occurs by a canonical serine protease mechanism, in which the side chain hydroxyl group of the serine supplies its oxygen atom to form the C-terminus of the beta chain, while the remainder of the serine residue undergoes an oxidative deamination to produce ammonia and the pyruvoyl prosthetic group on the alpha chain. During this reaction, the Ser that is part of the protease active site of the proenzyme becomes the pyruvoyl prosthetic group, which constitutes an essential element of the active site of the mature decarboxylase.

It is found in the cell membrane. The catalysed reaction is a 1,2-diacyl-sn-glycero-3-phospho-L-serine + H(+) = a 1,2-diacyl-sn-glycero-3-phosphoethanolamine + CO2. The protein operates within phospholipid metabolism; phosphatidylethanolamine biosynthesis; phosphatidylethanolamine from CDP-diacylglycerol: step 2/2. Its function is as follows. Catalyzes the formation of phosphatidylethanolamine (PtdEtn) from phosphatidylserine (PtdSer). The chain is Phosphatidylserine decarboxylase proenzyme from Herminiimonas arsenicoxydans.